A 1309-amino-acid chain; its full sequence is Target of rapamycin complex 2 subunit ste20 (1309 aa).

Positions 24-110 constitute an REM-1 domain; that stretch reads DFIKKMNTTD…IESFQGENGE (87 aa). The tract at residues 105-128 is disordered; that stretch reads QGENGEAKTGSTSLTRSASATVSR. Positions 113 to 128 are enriched in polar residues; that stretch reads TGSTSLTRSASATVSR. Ser-151 bears the Phosphoserine mark. A disordered region spans residues 183-205; that stretch reads NVNEKNNSSSEDTQPNGKRPSSL. Polar residues predominate over residues 194–205; it reads DTQPNGKRPSSL. 6 helical membrane passes run 285 to 305, 392 to 412, 504 to 524, 564 to 584, 926 to 946, and 984 to 1004; these read LFLD…WILS, LIDG…LVYL, VIDL…ESFL, TAVL…VCMI, LNHW…LEVC, and LLLR…INFI. Thr-1203 bears the Phosphothreonine mark.

The protein belongs to the RICTOR family. As to quaternary structure, the target of rapamycin complex 2 (TORC2) is composed of at least bit61, pop3/wat1, sin1, ste20 and tor1. In terms of processing, either Ser-203 or Ser-204 are phosphorylated as well.

It is found in the membrane. Component of TORC2, which regulates multiple cellular processes to control cell growth in response to environmental signals. TORC2 is required for cell survival under various stress conditions. TORC2 positively controls G1 cell-cycle arrest, sexual development and amino acid uptake. Positively regulates amino acid uptake through the control of expression of amino acid permeases. The chain is Target of rapamycin complex 2 subunit ste20 from Schizosaccharomyces pombe (strain 972 / ATCC 24843) (Fission yeast).